Consider the following 367-residue polypeptide: Alanine racemase (367 aa).

Lysine 35 acts as the Proton acceptor; specific for D-alanine in catalysis. Lysine 35 is subject to N6-(pyridoxal phosphate)lysine. Residue arginine 130 coordinates substrate. Tyrosine 256 (proton acceptor; specific for L-alanine) is an active-site residue. Methionine 304 contributes to the substrate binding site.

This sequence belongs to the alanine racemase family. Requires pyridoxal 5'-phosphate as cofactor.

It carries out the reaction L-alanine = D-alanine. It functions in the pathway amino-acid biosynthesis; D-alanine biosynthesis; D-alanine from L-alanine: step 1/1. Functionally, catalyzes the interconversion of L-alanine and D-alanine. May also act on other amino acids. This chain is Alanine racemase (alr), found in Methylibium petroleiphilum (strain ATCC BAA-1232 / LMG 22953 / PM1).